The chain runs to 292 residues: 33 kDa chaperonin (292 aa).

Cystine bridges form between C230–C232 and C263–C266.

It belongs to the HSP33 family. Under oxidizing conditions two disulfide bonds are formed involving the reactive cysteines. Under reducing conditions zinc is bound to the reactive cysteines and the protein is inactive.

Its subcellular location is the cytoplasm. Functionally, redox regulated molecular chaperone. Protects both thermally unfolding and oxidatively damaged proteins from irreversible aggregation. Plays an important role in the bacterial defense system toward oxidative stress. This chain is 33 kDa chaperonin, found in Salmonella paratyphi A (strain ATCC 9150 / SARB42).